Consider the following 448-residue polypeptide: Serine--tRNA ligase (448 aa).

Position 255-257 (255-257) interacts with L-serine; the sequence is TSE. 286–288 contacts ATP; the sequence is RSE. Residue glutamate 309 participates in L-serine binding. 373–376 is a binding site for ATP; the sequence is EISS. Serine 408 lines the L-serine pocket.

This sequence belongs to the class-II aminoacyl-tRNA synthetase family. Type-1 seryl-tRNA synthetase subfamily. Homodimer. The tRNA molecule binds across the dimer.

The protein localises to the cytoplasm. It carries out the reaction tRNA(Ser) + L-serine + ATP = L-seryl-tRNA(Ser) + AMP + diphosphate + H(+). The enzyme catalyses tRNA(Sec) + L-serine + ATP = L-seryl-tRNA(Sec) + AMP + diphosphate + H(+). It functions in the pathway aminoacyl-tRNA biosynthesis; selenocysteinyl-tRNA(Sec) biosynthesis; L-seryl-tRNA(Sec) from L-serine and tRNA(Sec): step 1/1. Functionally, catalyzes the attachment of serine to tRNA(Ser). Is also able to aminoacylate tRNA(Sec) with serine, to form the misacylated tRNA L-seryl-tRNA(Sec), which will be further converted into selenocysteinyl-tRNA(Sec). In Bordetella petrii (strain ATCC BAA-461 / DSM 12804 / CCUG 43448), this protein is Serine--tRNA ligase.